The sequence spans 676 residues: Lon-like protease BrxL (676 aa).

It belongs to the BrxL family.

In terms of biological role, BREX systems (bacteriophage exclusion) provide immunity against bacteriophage. Part of a type 1 BREX system. This system allows phage adsorption but prevents phage DNA replication, without degradation of the phage DNA. Methylation of bacterial DNA by PglX probably guides self/non-self discrimination. When the brxA-brxB-brxC-pglX and pglZ-brxL operons are transformed into a susceptible B.subtilis strain (BEST7003) they confer resistance to bacteriophages SPbeta, SP16, Zeta, phi3T and SP02 and partial protection to phages SP01 and SP82G (these include lytic and temperate phage). They do not protect against phages phi105, rho10 or rho14. Additionally confers a very slight reduction in efficiency of plasmid transformation. This is Lon-like protease BrxL from Bacillus cereus (strain H3081.97).